The chain runs to 440 residues: Methionine aminopeptidase 2-2 (440 aa).

A disordered region spans residues 1–102; it reads MAAQVPTEAL…KGQEEEYRDE (102 aa). Residues 36-46 are compositionally biased toward acidic residues; sequence DSDDSDEEGEE. Residues 56–70 are compositionally biased toward basic residues; it reads AKKKKKNKKKKKKKS. His-194 lines the substrate pocket. Asp-214, Asp-225, and His-294 together coordinate a divalent metal cation. Substrate is bound at residue His-302. 2 residues coordinate a divalent metal cation: Glu-327 and Glu-421.

Belongs to the peptidase M24A family. Methionine aminopeptidase eukaryotic type 2 subfamily. It depends on Co(2+) as a cofactor. Requires Zn(2+) as cofactor. Mn(2+) is required as a cofactor. The cofactor is Fe(2+).

The protein localises to the cytoplasm. It catalyses the reaction Release of N-terminal amino acids, preferentially methionine, from peptides and arylamides.. Its function is as follows. Cotranslationally removes the N-terminal methionine from nascent proteins. The N-terminal methionine is often cleaved when the second residue in the primary sequence is small and uncharged (Met-Ala-, Cys, Gly, Pro, Ser, Thr, or Val). The protein is Methionine aminopeptidase 2-2 of Colletotrichum graminicola (strain M1.001 / M2 / FGSC 10212) (Maize anthracnose fungus).